The following is a 288-amino-acid chain: Nucleotide-binding protein Neut_1559 (288 aa).

8–15 (GLSGSGKS) lines the ATP pocket. Residue 57–60 (DMRS) participates in GTP binding.

It belongs to the RapZ-like family.

Its function is as follows. Displays ATPase and GTPase activities. The polypeptide is Nucleotide-binding protein Neut_1559 (Nitrosomonas eutropha (strain DSM 101675 / C91 / Nm57)).